The primary structure comprises 385 residues: MNHLRAEGPASVLAIGTANPENILLQDEFPDYYFRVTKSEHMTQLKEKFRKICDKSMIRKRNCFLNEEHLKQNPRLVEHEMQTLDARQDMLVVEVPKLGKDACAKAIKEWGQPKSKITHLIFTSASTTDMPGADYHCAKLLGLSPSVKRVMMYQLGCYGGGTVLRIAKDIAENNKGARVLAVCCDIMACLFRGPSESDLELLVGQAIFGDGAAAVIVGAEPDESVGERPIFELVSTGQTILPNSEGTIGGHIREAGLIFDLHKDVPMLISNNIEKCLIEAFTPIGISDWNSIFWITHPGGKAILDKVEEKLHLKSDKFVDSRHVLSEHGNMSSSTVLFVMDELRKRSLEEGKSTTGDGFEWGVLFGFGPGLTVERVVVRSVPIKY.

The active site involves Cys-157.

This sequence belongs to the thiolase-like superfamily. Chalcone/stilbene synthases family. As to expression, expressed in bracts, flowers and young leaves. Not detected in mature leaves, roots and stems. Expressed in glandular trichomes.

It carries out the reaction hexanoyl-CoA + 3 malonyl-CoA + 3 H(+) = 3,5,7-trioxododecanoyl-CoA + 3 CO2 + 3 CoA. The enzyme catalyses 3,5,7-trioxododecanoyl-CoA = olivetol + CO2 + CoA. Its pathway is secondary metabolite biosynthesis; terpenoid biosynthesis. Its function is as follows. Involved in the biosynthesis of cannabinoids-related terpenophenolic natural products, which have pharmacological activity. Polyketide synthase responsible for olivetol biosynthesis, from a C(12)-polyketide, probably 3,5,7-trioxododecanoyl-CoA. Catalyzes the first step in the cannabinoids biosynthetic pathway. The preferred substrate is hexanoyl-CoA, but also accepts CoA esters with C4 to C8 aliphatic side chains. When using malonyl-CoA and hexanoyl-CoA as substrates, produces undetermined compounds distinct form olivetol or olivetolic acid that could be hexanoyl triacetic acid lactone (HTAL) and pentyl diacetic acid lactone (PDAL). Produces olivetolic acid when acting in concert with olivetolic acid cyclase (OAC). The sequence is that of 3,5,7-trioxododecanoyl-CoA synthase from Cannabis sativa (Hemp).